We begin with the raw amino-acid sequence, 886 residues long: Protein translocase subunit SecA (886 aa).

Residues Q81, 99–103 (GEGKT), and D489 each bind ATP.

Belongs to the SecA family.

The protein localises to the plastid. It localises to the chloroplast stroma. Its subcellular location is the chloroplast thylakoid membrane. The catalysed reaction is ATP + H2O + cellular proteinSide 1 = ADP + phosphate + cellular proteinSide 2.. Has a central role in coupling the hydrolysis of ATP to the transfer of proteins across the thylakoid membrane. In Phaeodactylum tricornutum (strain CCAP 1055/1), this protein is Protein translocase subunit SecA.